The following is a 203-amino-acid chain: tRNA (pseudouridine(54)-N(1))-methyltransferase (203 aa).

Residues Leu-135 and Gly-156 each contribute to the S-adenosyl-L-methionine site.

This sequence belongs to the methyltransferase superfamily. TrmY family. In terms of assembly, homodimer.

Its subcellular location is the cytoplasm. It catalyses the reaction pseudouridine(54) in tRNA + S-adenosyl-L-methionine = N(1)-methylpseudouridine(54) in tRNA + S-adenosyl-L-homocysteine + H(+). Functionally, specifically catalyzes the N1-methylation of pseudouridine at position 54 (Psi54) in tRNAs. In Thermococcus onnurineus (strain NA1), this protein is tRNA (pseudouridine(54)-N(1))-methyltransferase.